Reading from the N-terminus, the 412-residue chain is Argininosuccinate synthase (412 aa).

Residue 10–18 (AYSGGLDTS) coordinates ATP. Tyrosine 89 contributes to the L-citrulline binding site. An ATP-binding site is contributed by glycine 119. Positions 121, 125, and 126 each coordinate L-aspartate. Asparagine 125 is a binding site for L-citrulline. Residues arginine 129, serine 177, glutamate 261, and tyrosine 273 each contribute to the L-citrulline site.

It belongs to the argininosuccinate synthase family. Type 1 subfamily. As to quaternary structure, homotetramer.

The protein localises to the cytoplasm. The enzyme catalyses L-citrulline + L-aspartate + ATP = 2-(N(omega)-L-arginino)succinate + AMP + diphosphate + H(+). The protein operates within amino-acid biosynthesis; L-arginine biosynthesis; L-arginine from L-ornithine and carbamoyl phosphate: step 2/3. The polypeptide is Argininosuccinate synthase (Bifidobacterium longum subsp. infantis (strain ATCC 15697 / DSM 20088 / JCM 1222 / NCTC 11817 / S12)).